The sequence spans 167 residues: Peptide deformylase (167 aa).

Fe cation contacts are provided by Cys91 and His133. Residue Glu134 is part of the active site. His137 serves as a coordination point for Fe cation.

It belongs to the polypeptide deformylase family. Fe(2+) is required as a cofactor.

The catalysed reaction is N-terminal N-formyl-L-methionyl-[peptide] + H2O = N-terminal L-methionyl-[peptide] + formate. Functionally, removes the formyl group from the N-terminal Met of newly synthesized proteins. Requires at least a dipeptide for an efficient rate of reaction. N-terminal L-methionine is a prerequisite for activity but the enzyme has broad specificity at other positions. This chain is Peptide deformylase, found in Tolumonas auensis (strain DSM 9187 / NBRC 110442 / TA 4).